The following is a 126-amino-acid chain: Histone H2B type 1-M (126 aa).

Residues 1–36 (MPEPVKSAPVPKKGSKKAINKAQKKDGKKRKRSRKE) form a disordered region. Proline 2 is subject to N-acetylproline. At glutamate 3 the chain carries ADP-ribosyl glutamic acid. Residue lysine 6 is modified to N6-(2-hydroxyisobutyryl)lysine; alternate. Lysine 6 is modified (N6-(beta-hydroxybutyryl)lysine; alternate). Lysine 6 bears the N6-acetyllysine; alternate mark. Lysine 6 is modified (N6-butyryllysine; alternate). An N6-crotonyllysine; alternate modification is found at lysine 6. Lysine 6 is modified (N6-lactoyllysine; alternate). Residue lysine 6 forms a Glycyl lysine isopeptide (Lys-Gly) (interchain with G-Cter in SUMO2); alternate linkage. The residue at position 7 (serine 7) is an ADP-ribosylserine. The residue at position 12 (lysine 12) is an N6-(beta-hydroxybutyryl)lysine; alternate. Residues lysine 12 and lysine 13 each carry the N6-acetyllysine; alternate modification. 2 positions are modified to N6-crotonyllysine; alternate: lysine 12 and lysine 13. The residue at position 12 (lysine 12) is an N6-lactoyllysine; alternate. Lysine 13 carries the post-translational modification N6-(2-hydroxyisobutyryl)lysine; alternate. Residue serine 15 is modified to Phosphoserine; by STK4/MST1. An N6-acetyllysine; alternate mark is found at lysine 16, lysine 17, lysine 21, and lysine 24. N6-crotonyllysine; alternate is present on residues lysine 16, lysine 17, lysine 21, and lysine 24. Lysine 16, lysine 17, lysine 21, and lysine 24 each carry N6-lactoyllysine; alternate. Residues lysine 17 and lysine 21 each carry the N6-(beta-hydroxybutyryl)lysine; alternate modification. Lysine 17 carries the post-translational modification N6-glutaryllysine; alternate. N6-(2-hydroxyisobutyryl)lysine; alternate is present on residues lysine 21 and lysine 24. Lysine 21 is subject to N6-butyryllysine; alternate. Lysine 21 is covalently cross-linked (Glycyl lysine isopeptide (Lys-Gly) (interchain with G-Cter in SUMO2); alternate). Lysine 25 bears the N6-(2-hydroxyisobutyryl)lysine mark. Lysine 35 carries the N6-(2-hydroxyisobutyryl)lysine; alternate modification. Lysine 35 carries the post-translational modification N6-(beta-hydroxybutyryl)lysine; alternate. Lysine 35 is modified (N6-crotonyllysine; alternate). N6-glutaryllysine; alternate is present on lysine 35. N6-succinyllysine; alternate is present on lysine 35. Lysine 35 is covalently cross-linked (Glycyl lysine isopeptide (Lys-Gly) (interchain with G-Cter in ubiquitin); alternate). Glutamate 36 is modified (polyADP-ribosyl glutamic acid). Serine 37 is modified (phosphoserine; by AMPK). N6-(2-hydroxyisobutyryl)lysine; alternate occurs at positions 44, 47, and 58. N6-lactoyllysine; alternate is present on lysine 44. Lysine 44 and lysine 47 each carry N6-glutaryllysine; alternate. Lysine 47 bears the N6-methyllysine; alternate mark. Lysine 58 carries the N6,N6-dimethyllysine; alternate modification. Arginine 80 is subject to Dimethylated arginine. Residue lysine 86 is modified to N6-(2-hydroxyisobutyryl)lysine; alternate. Lysine 86 carries the N6-(beta-hydroxybutyryl)lysine; alternate modification. N6-acetyllysine; alternate is present on lysine 86. Lysine 86 carries the N6-lactoyllysine; alternate modification. Lysine 86 is subject to N6,N6,N6-trimethyllysine; alternate. An omega-N-methylarginine mark is found at arginine 87 and arginine 93. At lysine 109 the chain carries N6-(2-hydroxyisobutyryl)lysine; alternate. Position 109 is an N6-lactoyllysine; alternate (lysine 109). Residue lysine 109 is modified to N6-glutaryllysine; alternate. At lysine 109 the chain carries N6-methyllysine; alternate. O-linked (GlcNAc) serine glycosylation occurs at serine 113. Threonine 116 carries the post-translational modification Phosphothreonine. Residues lysine 117 and lysine 121 each carry the N6-(2-hydroxyisobutyryl)lysine; alternate modification. N6-(beta-hydroxybutyryl)lysine; alternate occurs at positions 117 and 121. Lysine 117 and lysine 121 each carry N6-lactoyllysine; alternate. Lysine 117 and lysine 121 each carry N6-glutaryllysine; alternate. N6-succinyllysine; alternate occurs at positions 117 and 121. Position 117 is an N6-malonyllysine; alternate (lysine 117). Lysine 117 is subject to N6-methylated lysine; alternate. A Glycyl lysine isopeptide (Lys-Gly) (interchain with G-Cter in ubiquitin); alternate cross-link involves residue lysine 121.

The protein belongs to the histone H2B family. The nucleosome is a histone octamer containing two molecules each of H2A, H2B, H3 and H4 assembled in one H3-H4 heterotetramer and two H2A-H2B heterodimers. The octamer wraps approximately 147 bp of DNA. In terms of processing, monoubiquitination at Lys-35 (H2BK34Ub) by the MSL1/MSL2 dimer is required for histone H3 'Lys-4' (H3K4me) and 'Lys-79' (H3K79me) methylation and transcription activation at specific gene loci, such as HOXA9 and MEIS1 loci. Similarly, monoubiquitination at Lys-121 (H2BK120Ub) by the RNF20/40 complex gives a specific tag for epigenetic transcriptional activation and is also prerequisite for histone H3 'Lys-4' and 'Lys-79' methylation. It also functions cooperatively with the FACT dimer to stimulate elongation by RNA polymerase II. H2BK120Ub also acts as a regulator of mRNA splicing: deubiquitination by USP49 is required for efficient cotranscriptional splicing of a large set of exons. Post-translationally, phosphorylation at Ser-37 (H2BS36ph) by AMPK in response to stress promotes transcription. Phosphorylated on Ser-15 (H2BS14ph) by STK4/MST1 during apoptosis; which facilitates apoptotic chromatin condensation. Also phosphorylated on Ser-15 in response to DNA double strand breaks (DSBs), and in correlation with somatic hypermutation and immunoglobulin class-switch recombination. GlcNAcylation at Ser-113 promotes monoubiquitination of Lys-121. It fluctuates in response to extracellular glucose, and associates with transcribed genes. In terms of processing, ADP-ribosylated by PARP1 or PARP2 on Ser-7 (H2BS6ADPr) in response to DNA damage. H2BS6ADPr promotes recruitment of CHD1L. Mono-ADP-ribosylated on Glu-3 (H2BE2ADPr) by PARP3 in response to single-strand breaks. Poly ADP-ribosylation on Glu-36 (H2BE35ADPr) by PARP1 regulates adipogenesis: it inhibits phosphorylation at Ser-37 (H2BS36ph), thereby blocking expression of pro-adipogenetic genes. Post-translationally, crotonylation (Kcr) is specifically present in male germ cells and marks testis-specific genes in post-meiotic cells, including X-linked genes that escape sex chromosome inactivation in haploid cells. Crotonylation marks active promoters and enhancers and confers resistance to transcriptional repressors. It is also associated with post-meiotically activated genes on autosomes. Lactylated in macrophages by EP300/P300 by using lactoyl-CoA directly derived from endogenous or exogenous lactate, leading to stimulates gene transcription.

The protein resides in the nucleus. It is found in the chromosome. Functionally, core component of nucleosome. Nucleosomes wrap and compact DNA into chromatin, limiting DNA accessibility to the cellular machineries which require DNA as a template. Histones thereby play a central role in transcription regulation, DNA repair, DNA replication and chromosomal stability. DNA accessibility is regulated via a complex set of post-translational modifications of histones, also called histone code, and nucleosome remodeling. The polypeptide is Histone H2B type 1-M (Homo sapiens (Human)).